The chain runs to 253 residues: ATP synthase subunit b 1 (253 aa).

The chain crosses the membrane as a helical span at residues G5–Y27.

The protein belongs to the ATPase B chain family. F-type ATPases have 2 components, F(1) - the catalytic core - and F(0) - the membrane proton channel. F(1) has five subunits: alpha(3), beta(3), gamma(1), delta(1), epsilon(1). F(0) has three main subunits: a(1), b(2) and c(10-14). The alpha and beta chains form an alternating ring which encloses part of the gamma chain. F(1) is attached to F(0) by a central stalk formed by the gamma and epsilon chains, while a peripheral stalk is formed by the delta and b chains.

It is found in the cell inner membrane. Functionally, f(1)F(0) ATP synthase produces ATP from ADP in the presence of a proton or sodium gradient. F-type ATPases consist of two structural domains, F(1) containing the extramembraneous catalytic core and F(0) containing the membrane proton channel, linked together by a central stalk and a peripheral stalk. During catalysis, ATP synthesis in the catalytic domain of F(1) is coupled via a rotary mechanism of the central stalk subunits to proton translocation. Its function is as follows. Component of the F(0) channel, it forms part of the peripheral stalk, linking F(1) to F(0). This is ATP synthase subunit b 1 from Rhodospirillum centenum (strain ATCC 51521 / SW).